The sequence spans 444 residues: Protein giant-lens (444 aa).

Residues 1-24 (MPTTLMLLPCMLLLLLTAAAVAVG) form the signal peptide. 2 Two-fingered domain 1 part repeats span residues 123 to 165 (RDVR…CRCP) and 285 to 307 (CPSS…YKMC). Intrachain disulfides connect Cys141-Cys162, Cys147-Cys285, Cys164-Cys307, Cys316-Cys341, Cys343-Cys370, Cys378-Cys405, Cys384-Cys413, and Cys407-Cys440. 2 Two-fingered domain repeats span residues 316-370 (CTHF…LFAC) and 378-444 (CQRK…MAND). The N-linked (GlcNAc...) asparagine glycan is linked to Asn333.

In terms of assembly, interacts with spi. As to expression, during embryogenesis, expression is in a segmental pattern in the ectoderm and in the nervous system. In the eye imaginal disks, expression in photoreceptor cells begins a few rows posterior to the morphogenetic furrow. Also expressed in the wing disk. In the adult, expression is seen in the retina and lamina.

It localises to the secreted. Regulates cell determination; development of ommatidia and optic lobe. Is a signaling molecule involved in the process of axon pathfinding in the eye. Part of the Ras pathway regulating programmed cell death in pupal eyes; activated by lozenge (lz). Antagonist for the Egfr receptor (gurken). Inhibits Egfr signaling without interacting directly with the receptor, but instead by sequestering the Egfr-activating ligand spitz (spi). This Drosophila melanogaster (Fruit fly) protein is Protein giant-lens (aos).